The chain runs to 363 residues: NADH-quinone oxidoreductase subunit H (363 aa).

The next 10 helical transmembrane spans lie at 29 to 49 (VLKILMIAIPLIVSVAFYVVW), 62 to 82 (GPMYVGMGLFQAFADVFKLLF), 94 to 114 (AIFVIAPLLTLAPSFAAWAVV), 127 to 147 (VGLLYLLAMTSLGVYGIILAG), 166 to 186 (VVSYEIAMGFALVGVMIAAGS), 202 to 222 (FFDWFLIPLFPLFIVYWVSGV), 239 to 257 (IVAGHMVEYSGSVFALFFL), 264 to 286 (ILVSFLISIFFLGGWLSPIQGWV), 293 to 313 (LIDWVWNGGWPWLLLKVLFFA), and 339 to 359 (FIPLTIVWIAVTALMVFSGVI).

The protein belongs to the complex I subunit 1 family. As to quaternary structure, NDH-1 is composed of 14 different subunits. Subunits NuoA, H, J, K, L, M, N constitute the membrane sector of the complex.

It is found in the cell inner membrane. The catalysed reaction is a quinone + NADH + 5 H(+)(in) = a quinol + NAD(+) + 4 H(+)(out). Its function is as follows. NDH-1 shuttles electrons from NADH, via FMN and iron-sulfur (Fe-S) centers, to quinones in the respiratory chain. The immediate electron acceptor for the enzyme in this species is believed to be ubiquinone. Couples the redox reaction to proton translocation (for every two electrons transferred, four hydrogen ions are translocated across the cytoplasmic membrane), and thus conserves the redox energy in a proton gradient. This subunit may bind ubiquinone. The sequence is that of NADH-quinone oxidoreductase subunit H from Xylella fastidiosa (strain Temecula1 / ATCC 700964).